The primary structure comprises 65 residues: Protein C' (65 aa).

This sequence belongs to the rhabdoviruses C protein family.

Functionally, seems to stimulates transcription by the viral polymerase. May play a role in viral pathogenesis or transmission by insects vectors. In Aedes (Bovine), this protein is Protein C' (P).